Reading from the N-terminus, the 556-residue chain is Double-strand-break repair protein rad21-like protein 1 (556 aa).

Belongs to the rad21 family. As to quaternary structure, component of some meiotic cohesin complex composed of the SMC1 (SMC1A or SMC1B) and SMC3 heterodimer attached via their hinge domain, RAD21L which link them, and STAG3.

The protein resides in the nucleus. It is found in the chromosome. Its function is as follows. Meiosis-specific component of some cohesin complex required during the initial steps of prophase I in male meiosis. Probably required during early meiosis in males for separation of sister chromatids and homologous chromosomes. Replaces RAD21 in premeiotic S phase (during early stages of prophase I), while RAD21 reappears in later stages of prophase I. Involved in synaptonemal complex assembly, synapsis initiation and crossover recombination between homologous chromosomes during prophase I. This Homo sapiens (Human) protein is Double-strand-break repair protein rad21-like protein 1 (RAD21L1).